A 288-amino-acid polypeptide reads, in one-letter code: Protoheme IX farnesyltransferase (288 aa).

A run of 9 helical transmembrane segments spans residues 16–36 (VWSL…PYFN), 37–57 (LHYI…SMGA), 88–108 (INGL…LAAF), 111–131 (LYAA…YSYL), 138–158 (WNII…WYTV), 162–182 (FSIL…IHVW), 210–230 (AICI…PAFF), 236–256 (VYMI…IVFV), and 265–285 (LKLF…VLIF).

It belongs to the UbiA prenyltransferase family. Protoheme IX farnesyltransferase subfamily.

It localises to the cell membrane. The catalysed reaction is heme b + (2E,6E)-farnesyl diphosphate + H2O = Fe(II)-heme o + diphosphate. It participates in porphyrin-containing compound metabolism; heme O biosynthesis; heme O from protoheme: step 1/1. Functionally, converts heme B (protoheme IX) to heme O by substitution of the vinyl group on carbon 2 of heme B porphyrin ring with a hydroxyethyl farnesyl side group. The sequence is that of Protoheme IX farnesyltransferase from Thermoplasma acidophilum (strain ATCC 25905 / DSM 1728 / JCM 9062 / NBRC 15155 / AMRC-C165).